Consider the following 497-residue polypeptide: 3-octaprenyl-4-hydroxybenzoate carboxy-lyase (497 aa).

Asn175 serves as a coordination point for Mn(2+). Prenylated FMN contacts are provided by residues Ile178–Arg180, Arg192–Leu194, and Arg197–Gly198. A Mn(2+)-binding site is contributed by Glu241. The Proton donor role is filled by Asp290.

The protein belongs to the UbiD family. Homohexamer. It depends on prenylated FMN as a cofactor. The cofactor is Mn(2+).

The protein localises to the cell membrane. The catalysed reaction is a 4-hydroxy-3-(all-trans-polyprenyl)benzoate + H(+) = a 2-(all-trans-polyprenyl)phenol + CO2. The protein operates within cofactor biosynthesis; ubiquinone biosynthesis. Catalyzes the decarboxylation of 3-octaprenyl-4-hydroxy benzoate to 2-octaprenylphenol, an intermediate step in ubiquinone biosynthesis. The sequence is that of 3-octaprenyl-4-hydroxybenzoate carboxy-lyase from Shigella dysenteriae serotype 1 (strain Sd197).